The following is a 512-amino-acid chain: Glycosyltransferase sdnJ (512 aa).

The signal sequence occupies residues 1–24; the sequence is MHAKRPSVLFFTISDFGYVNVVLA. N207 carries an N-linked (GlcNAc...) asparagine glycan.

It belongs to the UDP-glycosyltransferase family.

It carries out the reaction sordaricin + GDP-6-deoxy-alpha-D-altrose = 4'-O-demethylsordarin + GDP + H(+). It functions in the pathway antibiotic biosynthesis. In terms of biological role, glycosyltransferase; part of the gene cluster that mediates the biosynthesis of sordarin and hypoxysordarin, glycoside antibiotics with a unique tetracyclic diterpene aglycone structure. First, the geranylgeranyl diphosphate synthase sdnC constructs GGDP from farnesyl diphosphate and isopentenyl diphosphate. The diterpene cyclase sdnA then catalyzes the cyclization of GGDP to afford cycloaraneosene. Cycloaraneosene is then hydroxylated four times by the putative cytochrome P450 monooxygenases sdnB, sdnE, sdnF and sdnH to give a hydroxylated cycloaraneosene derivative such as cycloaraneosene-8,9,13,19-tetraol. Although the order of the hydroxylations is unclear, at least C8, C9 and C13 of the cycloaraneosene skeleton are hydroxylated before the sordaricin formation. Dehydration of the 13-hydroxy group of the hydroxylated cycloaraneosene derivative might be catalyzed by an unassigned hypothetical protein such as sdnG and sdnP to construct the cyclopentadiene moiety. The FAD-dependent oxidoreductase sdnN is proposed to catalyze the oxidation at C9 of the hydroxylated cycloaraneosene derivative and also catalyze the Baeyer-Villiger oxidation to give the lactone intermediate. The presumed lactone intermediate would be hydrolyzed to give an acrolein moiety and a carboxylate moiety. Then, [4+2]cycloaddition would occur between the acrolein moiety and the cyclopentadiene moiety to give sordaricin. SdnN might also be involved in the [4+2]cycloaddition after the hypothesized oxidation to accommodate the oxidized product and prompt the [4+2]cycloaddition. GDP-6-deoxy-D-altrose may be biosynthesized from GDP-D-mannose by the putative GDP-mannose-4,6-dehydratase sdnI and the short-chain dehydrogenase sdnK. The glycosyltransferase sdnJ catalyzes the attachment of 6-deoxy-D-altrose onto the 19-hydroxy group of sordaricin to give 4'-O-demethylsordarin. The methyltransferase sdnD would complete the biosynthesis of sordarin. Sordarin can be further modified into hypoxysordarin. The unique acyl chain at the 3'-hydroxy group of hypoxysordarin would be constructed by an iterative type I PKS sdnO and the trans-acting polyketide methyltransferase sdnL. SdnL would be responsible for the introduction of an alpha-methyl group of the polyketide chain. Alternatively, the beta-lactamase-like protein sdnR might be responsible for the cleavage and transfer of the polyketide chain from the PKS sdnO to sordarin. Two putative cytochrome P450 monooxygenases, sdnQ and sdnT, might catalyze the epoxidations of the polyketide chain to complete the biosynthesis of hypoxysordarin. Transcriptional regulators sdnM and sdnS are presumably encoded for the transcriptional regulation of the expression of the sdn gene cluster. This chain is Glycosyltransferase sdnJ, found in Sordaria araneosa (Pleurage araneosa).